The primary structure comprises 200 residues: Large ribosomal subunit protein uL4 (200 aa).

Positions 43–71 (RAQKTRAEVSGSGKKPWRQKGTGRARSGD) are disordered.

Belongs to the universal ribosomal protein uL4 family. In terms of assembly, part of the 50S ribosomal subunit.

Its function is as follows. One of the primary rRNA binding proteins, this protein initially binds near the 5'-end of the 23S rRNA. It is important during the early stages of 50S assembly. It makes multiple contacts with different domains of the 23S rRNA in the assembled 50S subunit and ribosome. In terms of biological role, forms part of the polypeptide exit tunnel. The chain is Large ribosomal subunit protein uL4 from Aggregatibacter actinomycetemcomitans (Actinobacillus actinomycetemcomitans).